Consider the following 377-residue polypeptide: Chaperone protein DnaJ (377 aa).

The 66-residue stretch at 5-70 folds into the J domain; the sequence is DYYEILGVSK…EKRSAYDQYG (66 aa). Residues 131-209 form a CR-type zinc finger; that stretch reads GVVREICVPT…CRGSGRIERT (79 aa). Zn(2+)-binding residues include Cys144, Cys147, Cys161, Cys164, Cys183, Cys186, Cys197, and Cys200. 4 CXXCXGXG motif repeats span residues 144–151, 161–168, 183–190, and 197–204; these read CLQCRGSG, CVTCHGHG, CPSCNGHG, and CNKCRGSG.

This sequence belongs to the DnaJ family. Homodimer. Zn(2+) is required as a cofactor.

It localises to the cytoplasm. Its function is as follows. Participates actively in the response to hyperosmotic and heat shock by preventing the aggregation of stress-denatured proteins and by disaggregating proteins, also in an autonomous, DnaK-independent fashion. Unfolded proteins bind initially to DnaJ; upon interaction with the DnaJ-bound protein, DnaK hydrolyzes its bound ATP, resulting in the formation of a stable complex. GrpE releases ADP from DnaK; ATP binding to DnaK triggers the release of the substrate protein, thus completing the reaction cycle. Several rounds of ATP-dependent interactions between DnaJ, DnaK and GrpE are required for fully efficient folding. Also involved, together with DnaK and GrpE, in the DNA replication of plasmids through activation of initiation proteins. The protein is Chaperone protein DnaJ of Blochmanniella floridana.